The sequence spans 289 residues: Inorganic pyrophosphatase (289 aa).

S2 carries the N-acetylserine modification. An N6-acetyllysine modification is found at K57. Mg(2+) contacts are provided by D116, D121, and D153. K228 bears the N6-acetyllysine mark. S250 carries the phosphoserine modification.

It belongs to the PPase family. Homodimer. It depends on Mg(2+) as a cofactor.

It is found in the cytoplasm. The enzyme catalyses diphosphate + H2O = 2 phosphate + H(+). This Mus musculus (Mouse) protein is Inorganic pyrophosphatase (Ppa1).